Consider the following 192-residue polypeptide: 3-hydroxyanthranilate 3,4-dioxygenase (192 aa).

Residue Arg-50 coordinates O2. Residues His-54, Glu-60, and His-102 each coordinate Fe cation. Glu-60 lines the substrate pocket. The substrate site is built by Arg-106 and Glu-116. A divalent metal cation is bound by residues Cys-131, Cys-134, Cys-168, and Cys-171.

The protein belongs to the 3-HAO family. Fe(2+) is required as a cofactor.

The protein localises to the cytoplasm. The catalysed reaction is 3-hydroxyanthranilate + O2 = (2Z,4Z)-2-amino-3-carboxymuconate 6-semialdehyde. It participates in cofactor biosynthesis; NAD(+) biosynthesis; quinolinate from L-kynurenine: step 3/3. Functionally, catalyzes the oxidative ring opening of 3-hydroxyanthranilate to 2-amino-3-carboxymuconate semialdehyde, which spontaneously cyclizes to quinolinate. This chain is 3-hydroxyanthranilate 3,4-dioxygenase, found in Coccidioides immitis (strain RS) (Valley fever fungus).